The primary structure comprises 146 residues: MAFLVFAFLTLMAVETYGSLFQFRLMINYLTGKLPILSHSFYGCYCGAGGSGWPKDAIDWCCQVHDCCYGRMSASGCDPYFQPYNFSYINKNLQCVETDTSGCPRRICECDRLASICFQQHDATYNSSNIDPKRKGCGTKSPPCPN.

Residues 1–18 (MAFLVFAFLTLMAVETYG) form the signal peptide. 7 disulfides stabilise this stretch: C44/C137, C46/C62, C61/C117, C67/C144, C68/C110, C77/C103, and C95/C108. The Ca(2+) site is built by Y45, G47, and G49. Residue H65 is part of the active site. D66 contributes to the Ca(2+) binding site. An N-linked (GlcNAc...) asparagine glycan is attached at N85. The active site involves D111. N126 is a glycosylation site (N-linked (GlcNAc...) asparagine).

Ca(2+) serves as cofactor. Post-translationally, N-glycosylated. Glycosylated with mannose chains including Man2(GlcNAc), Man2(GlcNAc)2, Man2(GlcNAc)3, Man2(GlcNAc)4 and Man2(GlcNAc)5. As to expression, expressed by the skin glands (at protein level).

The protein localises to the secreted. The enzyme catalyses a 1,2-diacyl-sn-glycero-3-phosphocholine + H2O = a 1-acyl-sn-glycero-3-phosphocholine + a fatty acid + H(+). Functionally, PLA2 catalyzes the calcium-dependent hydrolysis of the 2-acyl groups in 3-sn-phosphoglycerides. In Pithecopus azureus (Orange-legged monkey tree frog), this protein is Phospholipase A2.